The following is a 295-amino-acid chain: 4-hydroxy-tetrahydrodipicolinate synthase (295 aa).

Thr47 serves as a coordination point for pyruvate. Catalysis depends on Tyr135, which acts as the Proton donor/acceptor. The Schiff-base intermediate with substrate role is filled by Lys163. A pyruvate-binding site is contributed by Ile206.

It belongs to the DapA family. As to quaternary structure, homodimer.

Its subcellular location is the cytoplasm. The enzyme catalyses L-aspartate 4-semialdehyde + pyruvate = (2S,4S)-4-hydroxy-2,3,4,5-tetrahydrodipicolinate + H2O + H(+). It functions in the pathway amino-acid biosynthesis; L-lysine biosynthesis via DAP pathway; (S)-tetrahydrodipicolinate from L-aspartate: step 3/4. In terms of biological role, catalyzes the condensation of (S)-aspartate-beta-semialdehyde [(S)-ASA] and pyruvate to 4-hydroxy-tetrahydrodipicolinate (HTPA). The chain is 4-hydroxy-tetrahydrodipicolinate synthase from Staphylococcus saprophyticus subsp. saprophyticus (strain ATCC 15305 / DSM 20229 / NCIMB 8711 / NCTC 7292 / S-41).